Consider the following 356-residue polypeptide: S-adenosylmethionine:tRNA ribosyltransferase-isomerase (356 aa).

Belongs to the QueA family. As to quaternary structure, monomer.

Its subcellular location is the cytoplasm. It catalyses the reaction 7-aminomethyl-7-carbaguanosine(34) in tRNA + S-adenosyl-L-methionine = epoxyqueuosine(34) in tRNA + adenine + L-methionine + 2 H(+). It participates in tRNA modification; tRNA-queuosine biosynthesis. Transfers and isomerizes the ribose moiety from AdoMet to the 7-aminomethyl group of 7-deazaguanine (preQ1-tRNA) to give epoxyqueuosine (oQ-tRNA). This chain is S-adenosylmethionine:tRNA ribosyltransferase-isomerase, found in Shigella dysenteriae serotype 1 (strain Sd197).